A 131-amino-acid chain; its full sequence is uncharacterized protein (131 aa).

The next 2 membrane-spanning stretches (helical) occupy residues 61 to 81 and 102 to 122; these read LLLL…YLPI and VCSI…ALRY.

It localises to the membrane. This is an uncharacterized protein from Saccharomyces cerevisiae (strain ATCC 204508 / S288c) (Baker's yeast).